The sequence spans 76 residues: cAMP-dependent protein kinase inhibitor alpha (76 aa).

Thr-2 is subject to N-acetylthreonine. Positions 49–76 are disordered; that stretch reads KTEGEEDAQRSSTEQSGEAQGEAAKSES.

The protein belongs to the PKI family.

Functionally, extremely potent competitive inhibitor of cAMP-dependent protein kinase activity, this protein interacts with the catalytic subunit of the enzyme after the cAMP-induced dissociation of its regulatory chains. This is cAMP-dependent protein kinase inhibitor alpha (PKIA) from Homo sapiens (Human).